Consider the following 259-residue polypeptide: MGTASRAGIASARRIVVKVGSSSISGDNAGQIAPLVDAIASVHARGAEVVLVSSGAIATGMPFLRLDDRPADLATQQAAAAVGQSVLIFRYQESLDRYGIVAGQVLLTAGDLAAPDHRENAQRAMERLLGLRLLPIVNENDTVATHEIRFGDNDRLAALVARLVDADLLLLLSDVDALYTRPPEEPGARRIEHVGFGDELDGVEIGSTGTGVGTGGAVTKVAAARLAAEAGTGVLLTSTAQVHSALAGEHVGTWFAPRG.

Lys-18 lines the ATP pocket. Substrate is bound by residues Ser-54, Asp-141, and Asn-153. 173–174 (SD) lines the ATP pocket.

Belongs to the glutamate 5-kinase family.

It localises to the cytoplasm. It catalyses the reaction L-glutamate + ATP = L-glutamyl 5-phosphate + ADP. It participates in amino-acid biosynthesis; L-proline biosynthesis; L-glutamate 5-semialdehyde from L-glutamate: step 1/2. Its function is as follows. Catalyzes the transfer of a phosphate group to glutamate to form L-glutamate 5-phosphate. The protein is Glutamate 5-kinase of Clavibacter michiganensis subsp. michiganensis (strain NCPPB 382).